The primary structure comprises 295 residues: Probable adenylate kinase 6, chloroplastic (295 aa).

Residues 1-46 (MAVSHRLLRPATTTIKNTFSSLFIRSLSSSSSGSSLDPKIDLEEAA) constitute a chloroplast transit peptide. 74–79 (GVGKGT) lines the ATP pocket. The tract at residues 94 to 123 (ATGDLVREELSSSGLLSSQLKELVNHGKLV) is NMP. AMP contacts are provided by residues threonine 95, arginine 100, 121-123 (KLV), 151-154 (GFPR), and glutamine 158. The tract at residues 187 to 235 (GRRICSECGGNYNVACIDIKGDDDTPRMYMPPLLPPPNCESKLISRADD) is LID. Residue arginine 188 participates in ATP binding. Arginine 243 is an AMP binding site. Glycine 271 contributes to the ATP binding site.

Belongs to the adenylate kinase family. Monomer.

The protein localises to the plastid. The protein resides in the chloroplast. It carries out the reaction AMP + ATP = 2 ADP. Functionally, catalyzes the reversible transfer of the terminal phosphate group between ATP and AMP. Plays an important role in cellular energy homeostasis and in adenine nucleotide metabolism. In Arabidopsis thaliana (Mouse-ear cress), this protein is Probable adenylate kinase 6, chloroplastic.